The following is a 519-amino-acid chain: Cilia- and flagella-associated protein 53 (519 aa).

Coiled-coil stretches lie at residues asparagine 80–serine 107 and leucine 210–glutamine 339. The interval threonine 498–serine 519 is disordered.

It belongs to the CFAP53 family.

It is found in the cytoplasm. The protein localises to the cytoskeleton. It localises to the cilium axoneme. The protein resides in the cilium basal body. In terms of biological role, microtubule inner protein (MIP) part of the dynein-decorated doublet microtubules (DMTs) in cilia axoneme, which is required for motile cilia beating. Regulates motility patterns of both 9+0 and 9+2 motile cilia through differential localization and recruitment of axonemal dynein components. Required for cilium motility within the spinal canal and Kuppfer's vesicle and is involved in the establishment of left-right symmetry during embryogenesis. In Danio rerio (Zebrafish), this protein is Cilia- and flagella-associated protein 53.